The chain runs to 158 residues: MHEGVQVSSKLEELQALLAPVVVALGYECWGIEFSAQGRHSMLRVYIDKEGGVLVDDCAIVSRQISGVLDVEDPISVEYTLEVSSPGMERPLFTIDQFAKFAGEQVKIKLRSPFEGRRNFQGLLRGVEEQDVVVQVEDHEFLLPIDMIDKANIIPSFD.

The protein belongs to the RimP family.

The protein localises to the cytoplasm. Functionally, required for maturation of 30S ribosomal subunits. The chain is Ribosome maturation factor RimP from Pseudomonas fluorescens (strain SBW25).